The following is a 161-amino-acid chain: Allophycocyanin alpha chain (161 aa).

The residue at position 71 (Asn-71) is an N4-methylasparagine. A (2R,3E)-phycocyanobilin-binding site is contributed by Cys-81.

The protein belongs to the phycobiliprotein family. Heterodimer of an alpha and a beta chain. Post-translationally, contains one covalently linked phycocyanobilin chromophore.

It localises to the cellular thylakoid membrane. Functionally, light-harvesting photosynthetic bile pigment-protein from the phycobiliprotein complex. Allophycocyanin has a maximum absorption at approximately 650 nanometers. The sequence is that of Allophycocyanin alpha chain (apcA) from Thermosynechococcus vestitus (strain NIES-2133 / IAM M-273 / BP-1).